A 607-amino-acid chain; its full sequence is Transporter aclS (607 aa).

12 consecutive transmembrane segments (helical) span residues leucine 67–leucine 87, isoleucine 91–proline 111, leucine 152–leucine 172, valine 192–tyrosine 212, leucine 221–leucine 241, serine 262–leucine 282, valine 317–leucine 337, alanine 364–aspartate 384, glycine 423–alanine 443, threonine 445–isoleucine 465, glycine 500–asparagine 520, and histidine 531–valine 551. The segment at asparagine 583–valine 607 is disordered. Over residues aspartate 592–valine 607 the composition is skewed to basic and acidic residues.

The protein belongs to the purine-cytosine permease (2.A.39) family.

It is found in the membrane. In terms of biological role, transporter; part of the gene cluster that mediates the biosynthesis of aspirochlorine (or antibiotic A30641), an unusual halogenated spiro compound with distinctive antifungal properties due to selective inhibition of protein biosynthesis, and which is also active against bacteria, viruses, and murine tumor cells. The sequence is that of Transporter aclS from Aspergillus oryzae (strain ATCC 42149 / RIB 40) (Yellow koji mold).